A 485-amino-acid chain; its full sequence is Ribulose bisphosphate carboxylase large chain (485 aa).

Positions 124 and 174 each coordinate substrate. K176 (proton acceptor) is an active-site residue. K178 contacts substrate. K202, D204, and E205 together coordinate Mg(2+). K202 carries the N6-carboxylysine modification. Residue H294 is the Proton acceptor of the active site. Substrate is bound by residues R295, H327, and S379.

It belongs to the RuBisCO large chain family. Type I subfamily. As to quaternary structure, heterohexadecamer of 8 large chains and 8 small chains. The cofactor is Mg(2+).

The enzyme catalyses 2 (2R)-3-phosphoglycerate + 2 H(+) = D-ribulose 1,5-bisphosphate + CO2 + H2O. The catalysed reaction is D-ribulose 1,5-bisphosphate + O2 = 2-phosphoglycolate + (2R)-3-phosphoglycerate + 2 H(+). RuBisCO catalyzes two reactions: the carboxylation of D-ribulose 1,5-bisphosphate, the primary event in carbon dioxide fixation, as well as the oxidative fragmentation of the pentose substrate in the photorespiration process. Both reactions occur simultaneously and in competition at the same active site. In Rhodopseudomonas palustris (strain BisB18), this protein is Ribulose bisphosphate carboxylase large chain.